A 122-amino-acid chain; its full sequence is Small ribosomal subunit protein uS13 (122 aa).

Residues 95–122 (GLPVHGQRTKTNARTRKGPARTVAGKKK) form a disordered region.

The protein belongs to the universal ribosomal protein uS13 family. As to quaternary structure, part of the 30S ribosomal subunit. Forms a loose heterodimer with protein S19. Forms two bridges to the 50S subunit in the 70S ribosome.

Functionally, located at the top of the head of the 30S subunit, it contacts several helices of the 16S rRNA. In the 70S ribosome it contacts the 23S rRNA (bridge B1a) and protein L5 of the 50S subunit (bridge B1b), connecting the 2 subunits; these bridges are implicated in subunit movement. Contacts the tRNAs in the A and P-sites. The chain is Small ribosomal subunit protein uS13 from Geotalea uraniireducens (strain Rf4) (Geobacter uraniireducens).